The sequence spans 336 residues: Neuropeptides B/W receptor type 2 (336 aa).

The segment at 1-25 is disordered; the sequence is MMEATGLEGLESTSSPCPGSTGTGL. Over 1 to 45 the chain is Extracellular; sequence MMEATGLEGLESTSSPCPGSTGTGLSWDNGTRHNATFPEPLPALY. Over residues 12-25 the composition is skewed to low complexity; sequence STSSPCPGSTGTGL. N-linked (GlcNAc...) asparagine glycosylation is found at N29 and N34. The chain crosses the membrane as a helical span at residues 46-68; it reads VLLPVVYSVICAVGLVGNAAVIC. Residues 69-80 lie on the Cytoplasmic side of the membrane; that stretch reads VILRAPKMKTVT. Residues 81-103 traverse the membrane as a helical segment; it reads HVFILNLAIADGLFTLVLPTNIA. The Extracellular segment spans residues 104–127; that stretch reads EHLLQRWPFGEVLCKLVLAIDHCN. C117 and C197 form a disulfide bridge. The chain crosses the membrane as a helical span at residues 128 to 146; that stretch reads IFSSVYFLAAMSIDRYLVV. Over 147-165 the chain is Cytoplasmic; it reads LATARSRRMPRRTVHRAKV. The helical transmembrane segment at 166–188 threads the bilayer; it reads ASLCVWLGVTVAVLPFLTFAGVY. Residues 189–213 lie on the Extracellular side of the membrane; that stretch reads NNELQVTSCGLSFPRPERAWFQASR. Residues 214 to 236 traverse the membrane as a helical segment; it reads IYTLVLGFVVPMCTLCVLYADLL. Residues 237-256 are Cytoplasmic-facing; that stretch reads RRLRALRLHSGAKALGKAKR. Residues 257 to 279 form a helical membrane-spanning segment; sequence KVSLLVLAVLAVGLLCWTPFHLA. Residues 280-293 lie on the Extracellular side of the membrane; that stretch reads SIVALTTDLPQTPL. The helical transmembrane segment at 294–316 threads the bilayer; sequence VIIVSYVVTSLSYTSSCLNPFLY. At 317 to 336 the chain is on the cytoplasmic side; the sequence is AFLDHSFRKSLRTACRCQGA.

It belongs to the G-protein coupled receptor 1 family.

The protein resides in the cell membrane. Its function is as follows. Interacts specifically with a number of opioid ligands. Receptor for neuropeptides B and W, which may be involved in neuroendocrine system regulation, food intake and the organization of other signals. This chain is Neuropeptides B/W receptor type 2 (NPBWR2), found in Bos taurus (Bovine).